Reading from the N-terminus, the 113-residue chain is Prostate and testis expressed protein 2 (113 aa).

The signal sequence occupies residues Met-1–Ala-26. The region spanning Ile-29–Pro-110 is the UPAR/Ly6 domain. Cystine bridges form between Cys-31–Cys-57, Cys-34–Cys-42, Cys-49–Cys-80, and Cys-84–Cys-101.

It belongs to the PATE family. As to expression, isoform 1 and isoform 2 are expressed in prostate and testis. Isoform 2 is expressed in male and female brain at equivalent levels, in particular in cerebellum, cerebral cortex, corpus callosum, occipital, parrietal and temporal lobes, and pons, but not in amygdala, cerebral peduncle, hippocampus and thalamus.

It localises to the secreted. The protein is Prostate and testis expressed protein 2 (PATE2) of Homo sapiens (Human).